Consider the following 386-residue polypeptide: Lycopene beta-cyclase (386 aa).

Position 3-33 (3-33) interacts with NAD(+); sequence DLILVGGGLANGLIAWRLRQRYPQLNLLLIE.

Belongs to the lycopene cyclase family. The cofactor is FAD.

It carries out the reaction a carotenoid psi-end group = a carotenoid beta-end derivative. The enzyme catalyses all-trans-lycopene = gamma-carotene. The catalysed reaction is gamma-carotene = all-trans-beta-carotene. Its pathway is carotenoid biosynthesis; beta-carotene biosynthesis. Functionally, catalyzes the double cyclization reaction which converts lycopene to beta-carotene. The polypeptide is Lycopene beta-cyclase (Pseudescherichia vulneris (Escherichia vulneris)).